The chain runs to 513 residues: GMP synthase [glutamine-hydrolyzing] (513 aa).

Residues 9–198 enclose the Glutamine amidotransferase type-1 domain; the sequence is LILVLDFGSQ…VRRVCECKGQ (190 aa). The Nucleophile role is filled by Cys-86. Residues His-172 and Glu-174 contribute to the active site. One can recognise a GMPS ATP-PPase domain in the interval 199–388; it reads WTMENFIEIE…LGIPEHLVWR (190 aa). Residue 226 to 232 participates in ATP binding; sequence SGGVDSS.

As to quaternary structure, homodimer.

It catalyses the reaction XMP + L-glutamine + ATP + H2O = GMP + L-glutamate + AMP + diphosphate + 2 H(+). The protein operates within purine metabolism; GMP biosynthesis; GMP from XMP (L-Gln route): step 1/1. In terms of biological role, catalyzes the synthesis of GMP from XMP. This chain is GMP synthase [glutamine-hydrolyzing], found in Staphylococcus aureus (strain MSSA476).